Reading from the N-terminus, the 91-residue chain is RNA-binding protein Hfq (91 aa).

In terms of domain architecture, Sm spans aspartate 9–valine 69.

This sequence belongs to the Hfq family. As to quaternary structure, homohexamer.

RNA chaperone that binds small regulatory RNA (sRNAs) and mRNAs to facilitate mRNA translational regulation in response to envelope stress, environmental stress and changes in metabolite concentrations. Also binds with high specificity to tRNAs. In Pseudothermotoga lettingae (strain ATCC BAA-301 / DSM 14385 / NBRC 107922 / TMO) (Thermotoga lettingae), this protein is RNA-binding protein Hfq.